The sequence spans 408 residues: Arginine biosynthesis bifunctional protein ArgJ (408 aa).

Positions 156, 182, 193, 279, 403, and 408 each coordinate substrate. T193 acts as the Nucleophile in catalysis.

This sequence belongs to the ArgJ family. In terms of assembly, heterotetramer of two alpha and two beta chains.

The protein resides in the cytoplasm. The catalysed reaction is N(2)-acetyl-L-ornithine + L-glutamate = N-acetyl-L-glutamate + L-ornithine. It catalyses the reaction L-glutamate + acetyl-CoA = N-acetyl-L-glutamate + CoA + H(+). Its pathway is amino-acid biosynthesis; L-arginine biosynthesis; L-ornithine and N-acetyl-L-glutamate from L-glutamate and N(2)-acetyl-L-ornithine (cyclic): step 1/1. It participates in amino-acid biosynthesis; L-arginine biosynthesis; N(2)-acetyl-L-ornithine from L-glutamate: step 1/4. In terms of biological role, catalyzes two activities which are involved in the cyclic version of arginine biosynthesis: the synthesis of N-acetylglutamate from glutamate and acetyl-CoA as the acetyl donor, and of ornithine by transacetylation between N(2)-acetylornithine and glutamate. The chain is Arginine biosynthesis bifunctional protein ArgJ from Bordetella pertussis (strain Tohama I / ATCC BAA-589 / NCTC 13251).